Consider the following 272-residue polypeptide: Orotidine 5'-phosphate decarboxylase (272 aa).

K93 (proton donor) is an active-site residue.

The protein belongs to the OMP decarboxylase family. Type 2 subfamily.

It carries out the reaction orotidine 5'-phosphate + H(+) = UMP + CO2. Its pathway is pyrimidine metabolism; UMP biosynthesis via de novo pathway; UMP from orotate: step 2/2. In Roseiflexus castenholzii (strain DSM 13941 / HLO8), this protein is Orotidine 5'-phosphate decarboxylase.